Here is a 185-residue protein sequence, read N- to C-terminus: MVSTGEVRKGLTLIIDGELFRVMEANHVKQGRGTAFLRLTLRNVRTSATTVKTFMAGERFEVARLSTRNVQYLYREDNYIYVMNTETYDQFPVSVDLLEDALLYIRENETFDVLTYEDEVLDISLPPSVEMVVVETEPNYKGDTASGGGKPATTDTGLVVQVPSFVAVGERIRVDTTNGKYITRI.

This sequence belongs to the elongation factor P family.

Its subcellular location is the cytoplasm. It functions in the pathway protein biosynthesis; polypeptide chain elongation. Its function is as follows. Involved in peptide bond synthesis. Stimulates efficient translation and peptide-bond synthesis on native or reconstituted 70S ribosomes in vitro. Probably functions indirectly by altering the affinity of the ribosome for aminoacyl-tRNA, thus increasing their reactivity as acceptors for peptidyl transferase. The sequence is that of Elongation factor P from Herpetosiphon aurantiacus (strain ATCC 23779 / DSM 785 / 114-95).